The chain runs to 545 residues: Chaperonin GroEL 2 (545 aa).

ATP contacts are provided by residues 29–32 (TLGP), 86–90 (DGTTT), Gly413, 477–479 (DAA), and Asp493. The interval 526–545 (PEPAAAGHGHGHGHQHGPGF) is disordered. Positions 534-545 (GHGHGHQHGPGF) are enriched in basic residues.

It belongs to the chaperonin (HSP60) family. As to quaternary structure, forms a cylinder of 14 subunits composed of two heptameric rings stacked back-to-back. Interacts with the co-chaperonin GroES.

The protein resides in the cytoplasm. It catalyses the reaction ATP + H2O + a folded polypeptide = ADP + phosphate + an unfolded polypeptide.. Together with its co-chaperonin GroES, plays an essential role in assisting protein folding. The GroEL-GroES system forms a nano-cage that allows encapsulation of the non-native substrate proteins and provides a physical environment optimized to promote and accelerate protein folding. The chain is Chaperonin GroEL 2 from Salinispora arenicola (strain CNS-205).